A 480-amino-acid polypeptide reads, in one-letter code: Sensor histidine kinase CusS (480 aa).

The Cytoplasmic portion of the chain corresponds to 1–15; the sequence is MVSKPFQRPFSLATR. A helical membrane pass occupies residues 16 to 36; the sequence is LTFFISLATIAAFFAFAWIMI. The Periplasmic segment spans residues 37-186; sequence HSVKVHFAEQ…LHYINDLMNK (150 aa). Residues 187 to 207 form a helical membrane-spanning segment; it reads LIMTASVISILIVFIVLLAVH. The HAMP domain maps to 207 to 260; sequence HKGHAPIRSVSRQIQNITSKDLDVRLDPQTVPIELEQLVLSFNHMIERIEDVFT. At 208 to 480 the chain is on the cytoplasmic side; it reads KGHAPIRSVS…GTRFVIILPA (273 aa). Positions 268-480 constitute a Histidine kinase domain; the sequence is DIAHEIRTPI…GTRFVIILPA (213 aa). At histidine 271 the chain carries Phosphohistidine; by autocatalysis.

Post-translationally, autophosphorylated.

The protein resides in the cell inner membrane. The enzyme catalyses ATP + protein L-histidine = ADP + protein N-phospho-L-histidine.. Functionally, member of the two-component regulatory system CusS/CusR involved in response to copper and silver. Acts as a copper/silver ion sensor. Activates CusR by phosphorylation. The chain is Sensor histidine kinase CusS (cusS) from Escherichia coli O6:H1 (strain CFT073 / ATCC 700928 / UPEC).